Consider the following 204-residue polypeptide: Phosphoprotein p30 (204 aa).

Belongs to the asfivirus phosphoprotein p30 family. Oligomer. Interacts with host HNRNPK. Phosphorylated on serine residues in the 115 N-terminal amino acids.

The protein resides in the host cytoplasm. Its subcellular location is the host nucleus. It is found in the virion. Its function is as follows. Modifies the subcellular distribution of heterogeneous nuclear ribonucleoprotein K (HNRNPK) and may contribute to modulate HNRNPK functions related to processing and export of mRNAs during ASFV infection. Necessary for virus internalization. In African swine fever virus (strain Badajoz 1971 Vero-adapted) (Ba71V), this protein is Phosphoprotein p30.